The following is a 732-amino-acid chain: Elongation factor 2 (732 aa).

Residues 19–230 (ERIRNMGIAA…VSFKDIIDLT (212 aa)) form the tr-type G domain. Residues 28-35 (AHIDHGKT), 94-98 (DTPGH), and 148-151 (NKVD) each bind GTP. His597 carries the post-translational modification Diphthamide.

This sequence belongs to the TRAFAC class translation factor GTPase superfamily. Classic translation factor GTPase family. EF-G/EF-2 subfamily.

Its subcellular location is the cytoplasm. Functionally, catalyzes the GTP-dependent ribosomal translocation step during translation elongation. During this step, the ribosome changes from the pre-translocational (PRE) to the post-translocational (POST) state as the newly formed A-site-bound peptidyl-tRNA and P-site-bound deacylated tRNA move to the P and E sites, respectively. Catalyzes the coordinated movement of the two tRNA molecules, the mRNA and conformational changes in the ribosome. This is Elongation factor 2 from Thermococcus sibiricus (strain DSM 12597 / MM 739).